Here is a 326-residue protein sequence, read N- to C-terminus: Transcription cofactor vestigial-like protein 3 (326 aa).

Residues 54-82 form a disordered region; sequence SLEVTLPSKQEEEEEEEEDEEEEEKDQPA. Residue Lys62 forms a Glycyl lysine isopeptide (Lys-Gly) (interchain with G-Cter in SUMO2) linkage. Residues 64–78 show a composition bias toward acidic residues; the sequence is EEEEEEEEDEEEEEK. Lys129 is covalently cross-linked (Glycyl lysine isopeptide (Lys-Gly) (interchain with G-Cter in SUMO2)). A disordered region spans residues 184–208; sequence TADPNSWPGHGLHQTGPAPPPTASE.

The protein belongs to the vestigial family.

The protein resides in the nucleus. May act as a specific coactivator for the mammalian TEFs. The polypeptide is Transcription cofactor vestigial-like protein 3 (Mus musculus (Mouse)).